The sequence spans 130 residues: Ribosome-binding factor A (130 aa).

It belongs to the RbfA family. In terms of assembly, monomer. Binds 30S ribosomal subunits, but not 50S ribosomal subunits or 70S ribosomes.

The protein localises to the cytoplasm. One of several proteins that assist in the late maturation steps of the functional core of the 30S ribosomal subunit. Associates with free 30S ribosomal subunits (but not with 30S subunits that are part of 70S ribosomes or polysomes). Required for efficient processing of 16S rRNA. May interact with the 5'-terminal helix region of 16S rRNA. The sequence is that of Ribosome-binding factor A from Roseiflexus castenholzii (strain DSM 13941 / HLO8).